The following is a 662-amino-acid chain: Pollen receptor-like kinase 1 (662 aa).

The N-terminal stretch at 1–31 (MPPMQARTLSVYNVMVPLVCLLLFFSTPTHG) is a signal peptide. At 32–256 (LSDSEAILKF…ARPKSSSRGP (225 aa)) the chain is on the extracellular side. LRR repeat units lie at residues 79–98 (QMENLELSGSIDIEALSGLT), 99–121 (SLRTLSFMNNKFEGPFPDFKKLA), 122–144 (ALKSLYLSNNQFGGDIPGDAFEG), 147–169 (WLKKVHLAQNKFTGQIPSSVAKL), 171–191 (KLLELRLDGNQFTGEIPEFEH), and 192–214 (QLHLLNLSNNALTGPIPESLSMT). Asparagine 197 carries an N-linked (GlcNAc...) asparagine glycan. The interval 233 to 253 (ECDSPYIEHPPQSEARPKSSS) is disordered. A helical membrane pass occupies residues 257–277 (LVITAIVAALTILIILGVIFL). The Cytoplasmic segment spans residues 278–662 (LNRSYKNKKP…GESCESISFA (385 aa)). A disordered region spans residues 288–330 (RLAVETGPSSLQKKTGIREADQSRRDRKKADHRKGSGTTKRMG). The Protein kinase domain maps to 357-639 (KASAEILGSG…EREGDDDDFY (283 aa)). Serine 359 carries the phosphoserine modification. ATP-binding positions include 363 to 371 (LGSGCFGAS) and lysine 385. Serine 437 is modified (phosphoserine). Threonine 457 bears the Phosphothreonine mark. At tyrosine 527 the chain carries Phosphotyrosine. Positions 636–662 (DDFYSTYVSETDGRSSKGESCESISFA) are disordered. The span at 646–655 (TDGRSSKGES) shows a compositional bias: basic and acidic residues.

The protein belongs to the protein kinase superfamily. Ser/Thr protein kinase family. Interacts in vitro with ROPGEF1 (via PRONE domain). Expressed in pollen and/or in flowers, but not in leaves.

It localises to the cell membrane. It carries out the reaction L-seryl-[protein] + ATP = O-phospho-L-seryl-[protein] + ADP + H(+). The enzyme catalyses L-threonyl-[protein] + ATP = O-phospho-L-threonyl-[protein] + ADP + H(+). Receptor-like kinase involved in the control of pollen germination and pollen tube polar growth. The protein is Pollen receptor-like kinase 1 of Arabidopsis thaliana (Mouse-ear cress).